The following is a 462-amino-acid chain: Cysteine--tRNA ligase (462 aa).

Cysteine 27 is a Zn(2+) binding site. A 'HIGH' region motif is present at residues 29-39 (PTVYNYIHVGN). Residues cysteine 209, histidine 234, and glutamate 238 each coordinate Zn(2+). Residues 266–270 (KMSKS) carry the 'KMSKS' region motif. Lysine 269 lines the ATP pocket.

Belongs to the class-I aminoacyl-tRNA synthetase family. Monomer. Requires Zn(2+) as cofactor.

The protein resides in the cytoplasm. The catalysed reaction is tRNA(Cys) + L-cysteine + ATP = L-cysteinyl-tRNA(Cys) + AMP + diphosphate. The sequence is that of Cysteine--tRNA ligase from Finegoldia magna (strain ATCC 29328 / DSM 20472 / WAL 2508) (Peptostreptococcus magnus).